A 295-amino-acid polypeptide reads, in one-letter code: Sulfotransferase 1E1 (295 aa).

Residue 48–53 coordinates 3'-phosphoadenylyl sulfate; that stretch reads KSGTTW. 106 to 108 provides a ligand contact to substrate; that stretch reads KTH. Catalysis depends on H108, which acts as the Proton acceptor. 3'-phosphoadenylyl sulfate contacts are provided by R130 and S138. Residue S156 is modified to Phosphoserine. 3'-phosphoadenylyl sulfate contacts are provided by residues Y193, 227-232, and 257-259; these read TSFQEM and RKG.

Belongs to the sulfotransferase 1 family. As to quaternary structure, homodimer. As to expression, testis and at very low level in the placenta.

It is found in the cytoplasm. The protein localises to the cytosol. It catalyses the reaction estrone + 3'-phosphoadenylyl sulfate = estrone 3-sulfate + adenosine 3',5'-bisphosphate + H(+). The catalysed reaction is 17beta-estradiol + 3'-phosphoadenylyl sulfate = 17beta-estradiol 3-sulfate + adenosine 3',5'-bisphosphate + H(+). It carries out the reaction (24S)-hydroxycholesterol + 3'-phosphoadenylyl sulfate = (24S)-hydroxycholesterol 3-sulfate + adenosine 3',5'-bisphosphate + H(+). The enzyme catalyses 3beta-hydroxyandrost-5-en-17-one + 3'-phosphoadenylyl sulfate = dehydroepiandrosterone 3-sulfate + adenosine 3',5'-bisphosphate + H(+). It catalyses the reaction 4-ethylphenol + 3'-phosphoadenylyl sulfate = 4-ethylphenyl sulfate + adenosine 3',5'-bisphosphate + H(+). With respect to regulation, inhibited by estradiol. Functionally, sulfotransferase that utilizes 3'-phospho-5'-adenylyl sulfate (PAPS) as sulfonate donor to catalyze the sulfate conjugation of estradiol and estrone. Is a key enzyme in estrogen homeostasis, the sulfation of estrogens leads to their inactivation. Also sulfates dehydroepiandrosterone, pregnenolone, (24S)-hydroxycholesterol and xenobiotic compounds like ethinylestradiol, equalenin, diethyl stilbesterol and 1-naphthol at significantly lower efficiency. Does not sulfonate cortisol, testosterone and dopamine. May play a role in gut microbiota-host metabolic interaction. O-sulfonates 4-ethylphenol (4-EP), a dietary tyrosine-derived metabolite produced by gut bacteria. The product 4-EPS crosses the blood-brain barrier and may negatively regulate oligodendrocyte maturation and myelination, affecting the functional connectivity of different brain regions associated with the limbic system. The protein is Sulfotransferase 1E1 (Sult1e1) of Mus musculus (Mouse).